We begin with the raw amino-acid sequence, 131 residues long: Large ribosomal subunit protein bL17 (131 aa).

It belongs to the bacterial ribosomal protein bL17 family. As to quaternary structure, part of the 50S ribosomal subunit. Contacts protein L32.

This is Large ribosomal subunit protein bL17 from Thermotoga maritima (strain ATCC 43589 / DSM 3109 / JCM 10099 / NBRC 100826 / MSB8).